A 540-amino-acid polypeptide reads, in one-letter code: Chaperonin GroEL 1 (540 aa).

ATP-binding positions include 29-32 (TLGP), 86-90 (DGTTT), glycine 413, 478-480 (NAA), and aspartate 494.

Belongs to the chaperonin (HSP60) family. In terms of assembly, forms a cylinder of 14 subunits composed of two heptameric rings stacked back-to-back. Interacts with the co-chaperonin GroES.

The protein resides in the cytoplasm. It catalyses the reaction ATP + H2O + a folded polypeptide = ADP + phosphate + an unfolded polypeptide.. In terms of biological role, together with its co-chaperonin GroES, plays an essential role in assisting protein folding. The GroEL-GroES system forms a nano-cage that allows encapsulation of the non-native substrate proteins and provides a physical environment optimized to promote and accelerate protein folding. The protein is Chaperonin GroEL 1 of Mycobacterium sp. (strain JLS).